Here is a 252-residue protein sequence, read N- to C-terminus: Imidazole glycerol phosphate synthase subunit HisF (252 aa).

Residues Asp-11 and Asp-130 contribute to the active site.

Belongs to the HisA/HisF family. As to quaternary structure, heterodimer of HisH and HisF.

The protein localises to the cytoplasm. It catalyses the reaction 5-[(5-phospho-1-deoxy-D-ribulos-1-ylimino)methylamino]-1-(5-phospho-beta-D-ribosyl)imidazole-4-carboxamide + L-glutamine = D-erythro-1-(imidazol-4-yl)glycerol 3-phosphate + 5-amino-1-(5-phospho-beta-D-ribosyl)imidazole-4-carboxamide + L-glutamate + H(+). The protein operates within amino-acid biosynthesis; L-histidine biosynthesis; L-histidine from 5-phospho-alpha-D-ribose 1-diphosphate: step 5/9. Functionally, IGPS catalyzes the conversion of PRFAR and glutamine to IGP, AICAR and glutamate. The HisF subunit catalyzes the cyclization activity that produces IGP and AICAR from PRFAR using the ammonia provided by the HisH subunit. The protein is Imidazole glycerol phosphate synthase subunit HisF of Azoarcus sp. (strain BH72).